The chain runs to 184 residues: Peptide deformylase (184 aa).

2 residues coordinate Fe cation: Cys-111 and His-154. Residue Glu-155 is part of the active site. Residue His-158 coordinates Fe cation.

This sequence belongs to the polypeptide deformylase family. Fe(2+) serves as cofactor.

The catalysed reaction is N-terminal N-formyl-L-methionyl-[peptide] + H2O = N-terminal L-methionyl-[peptide] + formate. Functionally, removes the formyl group from the N-terminal Met of newly synthesized proteins. Requires at least a dipeptide for an efficient rate of reaction. N-terminal L-methionine is a prerequisite for activity but the enzyme has broad specificity at other positions. The protein is Peptide deformylase of Lactobacillus gasseri (strain ATCC 33323 / DSM 20243 / BCRC 14619 / CIP 102991 / JCM 1131 / KCTC 3163 / NCIMB 11718 / NCTC 13722 / AM63).